We begin with the raw amino-acid sequence, 71 residues long: Sec-independent protein translocase protein TatA (71 aa).

A helical transmembrane segment spans residues 1–21 (MGSFSLLHWLVVLVIVLLVFG). Positions 43–71 (LREDDKPTDQLGSTSQSTASGPQQDHGKH) are disordered. A compositionally biased stretch (polar residues) spans 52-65 (QLGSTSQSTASGPQ).

The protein belongs to the TatA/E family. The Tat system comprises two distinct complexes: a TatABC complex, containing multiple copies of TatA, TatB and TatC subunits, and a separate TatA complex, containing only TatA subunits. Substrates initially bind to the TatABC complex, which probably triggers association of the separate TatA complex to form the active translocon.

The protein localises to the cell inner membrane. Functionally, part of the twin-arginine translocation (Tat) system that transports large folded proteins containing a characteristic twin-arginine motif in their signal peptide across membranes. TatA could form the protein-conducting channel of the Tat system. In Xylella fastidiosa (strain 9a5c), this protein is Sec-independent protein translocase protein TatA.